Here is a 258-residue protein sequence, read N- to C-terminus: Type III pantothenate kinase (258 aa).

9 to 16 contacts ATP; it reads DIGNTSVN. 110 to 113 contacts substrate; it reads GADR. The active-site Proton acceptor is Asp-112. K(+) is bound at residue Asp-132. Position 135 (Thr-135) interacts with ATP. Thr-187 provides a ligand contact to substrate.

The protein belongs to the type III pantothenate kinase family. In terms of assembly, homodimer. NH4(+) is required as a cofactor. It depends on K(+) as a cofactor.

The protein localises to the cytoplasm. The enzyme catalyses (R)-pantothenate + ATP = (R)-4'-phosphopantothenate + ADP + H(+). The protein operates within cofactor biosynthesis; coenzyme A biosynthesis; CoA from (R)-pantothenate: step 1/5. In terms of biological role, catalyzes the phosphorylation of pantothenate (Pan), the first step in CoA biosynthesis. The protein is Type III pantothenate kinase of Dehalococcoides mccartyi (strain ATCC BAA-2266 / KCTC 15142 / 195) (Dehalococcoides ethenogenes (strain 195)).